The primary structure comprises 297 residues: NADPH-dependent 1-acyldihydroxyacetone phosphate reductase (297 aa).

Residues Gly-16 to Gly-20 carry the GXSXG motif. Ser-18 functions as the Nucleophile; for lipase activity in the catalytic mechanism. Residues Ile-21, Asp-64, Asn-93, Arg-126, Tyr-157, Lys-161, Val-190, and Thr-192 each coordinate NADP(+). Catalysis depends on Tyr-157, which acts as the Proton acceptor. The active-site Lowers pKa of active site Tyr is the Lys-161.

Belongs to the short-chain dehydrogenases/reductases (SDR) family.

It is found in the lipid droplet. The protein localises to the mitochondrion outer membrane. Its subcellular location is the endoplasmic reticulum. The enzyme catalyses a 1-acylglycerone 3-phosphate + NADPH + H(+) = a 1-acyl-sn-glycero-3-phosphate + NADP(+). It carries out the reaction 1-hexadecanoyl-sn-glycero-3-phosphate + NADP(+) = 1-hexadecanoylglycerone 3-phosphate + NADPH + H(+). The catalysed reaction is a triacylglycerol + H2O = a diacylglycerol + a fatty acid + H(+). It catalyses the reaction 1,2,3-tri-(9Z-octadecenoyl)-glycerol + H2O = di-(9Z)-octadecenoylglycerol + (9Z)-octadecenoate + H(+). Its activity is regulated as follows. Inhibited by divalent cations and N-ethylmaleimide. Activity is reduced under anaerobic growth conditions. Its function is as follows. Can convert acyl and alkyl dihydroxyacetone-phosphate (DHAP) into glycerolipids and ether lipids, respectively. Required for the biosynthesis of phosphatidic acid via the DHAP pathway, where it reduces 1-acyl DHAP to lysophosphatidic acid (LPA). Also has triacylglycerol (TAG) lipase activity. Involved in the mobilization of the non-polar storage lipids triacylglycerols (TAGs) from lipid particles by hydrolysis of TAGs. Required for spore germination. Plays a role in cell wall biogenesis, but this effect may be indirect by affecting the activities of cell wall synthesis enzymes. Lipolysis of TAG by AYR1 is essential for starvation-induced autophagy. Forms an NADPH-regulated cation-selective channel in the mitochondrial outer membrane. The sequence is that of NADPH-dependent 1-acyldihydroxyacetone phosphate reductase from Saccharomyces cerevisiae (strain ATCC 204508 / S288c) (Baker's yeast).